A 166-amino-acid polypeptide reads, in one-letter code: Probable tyrosine-protein phosphatase DG1060 (166 aa).

One can recognise a Tyrosine-protein phosphatase domain in the interval 9-162 (NFGMVADDLY…LVTYNNAPQW (154 aa)). C101 functions as the Phosphocysteine intermediate in the catalytic mechanism.

Belongs to the protein-tyrosine phosphatase family.

The protein localises to the cytoplasm. It carries out the reaction O-phospho-L-tyrosyl-[protein] + H2O = L-tyrosyl-[protein] + phosphate. The sequence is that of Probable tyrosine-protein phosphatase DG1060 (DG1060) from Dictyostelium discoideum (Social amoeba).